Consider the following 263-residue polypeptide: Phosphoribosylaminoimidazole-succinocarboxamide synthase (263 aa).

Positions 239-263 are disordered; the sequence is MNENEPPKPAGPVLVSSKPDGETRH.

The protein belongs to the SAICAR synthetase family.

It catalyses the reaction 5-amino-1-(5-phospho-D-ribosyl)imidazole-4-carboxylate + L-aspartate + ATP = (2S)-2-[5-amino-1-(5-phospho-beta-D-ribosyl)imidazole-4-carboxamido]succinate + ADP + phosphate + 2 H(+). It functions in the pathway purine metabolism; IMP biosynthesis via de novo pathway; 5-amino-1-(5-phospho-D-ribosyl)imidazole-4-carboxamide from 5-amino-1-(5-phospho-D-ribosyl)imidazole-4-carboxylate: step 1/2. The chain is Phosphoribosylaminoimidazole-succinocarboxamide synthase from Chelativorans sp. (strain BNC1).